Reading from the N-terminus, the 397-residue chain is CCA-adding enzyme (397 aa).

2 residues coordinate ATP: G27 and R30. CTP contacts are provided by G27 and R30. Residues D40 and D42 each contribute to the Mg(2+) site. ATP is bound by residues R111, D154, R157, R160, and R163. The CTP site is built by R111, D154, R157, R160, and R163.

The protein belongs to the tRNA nucleotidyltransferase/poly(A) polymerase family. Bacterial CCA-adding enzyme type 3 subfamily. As to quaternary structure, homodimer. Requires Mg(2+) as cofactor.

It catalyses the reaction a tRNA precursor + 2 CTP + ATP = a tRNA with a 3' CCA end + 3 diphosphate. The enzyme catalyses a tRNA with a 3' CCA end + 2 CTP + ATP = a tRNA with a 3' CCACCA end + 3 diphosphate. In terms of biological role, catalyzes the addition and repair of the essential 3'-terminal CCA sequence in tRNAs without using a nucleic acid template. Adds these three nucleotides in the order of C, C, and A to the tRNA nucleotide-73, using CTP and ATP as substrates and producing inorganic pyrophosphate. Has no poly(A) polymerase activity. This chain is CCA-adding enzyme, found in Bacillus subtilis (strain 168).